The chain runs to 501 residues: 2,3-bisphosphoglycerate-independent phosphoglycerate mutase (501 aa).

Mn(2+) is bound by residues Asp-12 and Ser-62. Ser-62 serves as the catalytic Phosphoserine intermediate. Residues His-121, 150–151 (RD), Arg-182, Arg-188, 253–256 (RSDR), and Lys-323 each bind substrate. Residues Asp-390, His-394, Asp-431, His-432, and His-450 each coordinate Mn(2+).

This sequence belongs to the BPG-independent phosphoglycerate mutase family. Monomer. The cofactor is Mn(2+).

It catalyses the reaction (2R)-2-phosphoglycerate = (2R)-3-phosphoglycerate. It participates in carbohydrate degradation; glycolysis; pyruvate from D-glyceraldehyde 3-phosphate: step 3/5. In terms of biological role, catalyzes the interconversion of 2-phosphoglycerate and 3-phosphoglycerate. The protein is 2,3-bisphosphoglycerate-independent phosphoglycerate mutase of Ehrlichia canis (strain Jake).